The chain runs to 142 residues: Salivary protein 15a (142 aa).

Positions 1–20 are cleaved as a signal peptide; sequence MKYLGLALISAVFLIGACQA. Intrachain disulfides connect Cys-27–Cys-44, Cys-40–Cys-108, and Cys-91–Cys-117.

The protein belongs to the PBP/GOBP family. In terms of tissue distribution, female salivary gland (at protein level).

The protein localises to the secreted. Functionally, inhibits contact coagulation pathway activation in the host by sequestering anionic polymers, such as polyphosphate and dextran sulfate, and thus blocking interaction of protein components of the pathway with negatively charged surfaces. Inhibits dextran sulfate-mediated autoactivation of host coagulation factor XII (F12). Inhibits dextran sulfate-mediated autoactivation of host factor XI (F11). Inhibits polyphosphate-mediated activation of host F11 by thrombin (F2). May inhibit dextran sulfate-mediated bradykinin generation in host plasma. The sequence is that of Salivary protein 15a from Phlebotomus duboscqi (Sandfly).